We begin with the raw amino-acid sequence, 144 residues long: Effector EagT6 (144 aa).

Homodimer. Two dimers interact with Tse6; this interaction is crucial for Tse6 loading onto VgrG1a.

Functionally, plays an essential role in toxin Tse6 delivery to target cells and specifically in the loading of Tse6 onto VgrG1a. The chain is Effector EagT6 from Pseudomonas aeruginosa (strain ATCC 15692 / DSM 22644 / CIP 104116 / JCM 14847 / LMG 12228 / 1C / PRS 101 / PAO1).